Reading from the N-terminus, the 592-residue chain is Membrane protein insertase YidC (592 aa).

Residues asparagine 7 to valine 27 form a helical membrane-spanning segment. A disordered region spans residues alanine 38 to glutamine 74. The span at alanine 41–glycine 69 shows a compositional bias: low complexity. A run of 4 helical transmembrane segments spans residues leucine 367 to phenylalanine 387, tryptophan 441 to isoleucine 461, leucine 486 to isoleucine 506, and phenylalanine 530 to isoleucine 550.

Belongs to the OXA1/ALB3/YidC family. Type 1 subfamily. As to quaternary structure, interacts with the Sec translocase complex via SecD. Specifically interacts with transmembrane segments of nascent integral membrane proteins during membrane integration.

The protein localises to the cell inner membrane. Required for the insertion and/or proper folding and/or complex formation of integral membrane proteins into the membrane. Involved in integration of membrane proteins that insert both dependently and independently of the Sec translocase complex, as well as at least some lipoproteins. Aids folding of multispanning membrane proteins. The chain is Membrane protein insertase YidC from Sinorhizobium fredii (strain NBRC 101917 / NGR234).